Consider the following 319-residue polypeptide: Cytochrome f (319 aa).

Residues 1 to 34 (MQNRNTYDLKKKMTRLISVLVMIHIITRTSISNA) form the signal peptide. 4 residues coordinate heme: Tyr35, Cys55, Cys58, and His59. The helical transmembrane segment at 285-304 (VKGLLLFLASVILAQIFLVL) threads the bilayer.

The protein belongs to the cytochrome f family. As to quaternary structure, the 4 large subunits of the cytochrome b6-f complex are cytochrome b6, subunit IV (17 kDa polypeptide, petD), cytochrome f and the Rieske protein, while the 4 small subunits are PetG, PetL, PetM and PetN. The complex functions as a dimer. Requires heme as cofactor.

The protein localises to the plastid. The protein resides in the chloroplast thylakoid membrane. Functionally, component of the cytochrome b6-f complex, which mediates electron transfer between photosystem II (PSII) and photosystem I (PSI), cyclic electron flow around PSI, and state transitions. The protein is Cytochrome f (petA) of Picea abies (Norway spruce).